A 457-amino-acid chain; its full sequence is C4-dicarboxylate transport protein (457 aa).

9 helical membrane passes run 22-42 (FQVV…PAFA), 55-75 (LVKM…IAGM), 90-110 (VYFL…AHVV), 138-158 (LTLV…AFTG), 168-188 (GPNI…LALV), 209-229 (LVHI…AFTI), 242-262 (WLVG…LGVV), 335-357 (LFIA…LAVA), and 376-396 (AATL…ILGV).

This sequence belongs to the dicarboxylate/amino acid:cation symporter (DAACS) (TC 2.A.23) family.

It localises to the cell inner membrane. In terms of biological role, responsible for the transport of dicarboxylates such as succinate, fumarate, and malate from the periplasm across the membrane. The sequence is that of C4-dicarboxylate transport protein from Xanthomonas oryzae pv. oryzae (strain MAFF 311018).